Here is a 223-residue protein sequence, read N- to C-terminus: Uracil-DNA glycosylase (223 aa).

D64 serves as the catalytic Proton acceptor.

This sequence belongs to the uracil-DNA glycosylase (UDG) superfamily. UNG family.

Its subcellular location is the cytoplasm. It carries out the reaction Hydrolyzes single-stranded DNA or mismatched double-stranded DNA and polynucleotides, releasing free uracil.. Excises uracil residues from the DNA which can arise as a result of misincorporation of dUMP residues by DNA polymerase or due to deamination of cytosine. The sequence is that of Uracil-DNA glycosylase from Desulfitobacterium hafniense (strain DSM 10664 / DCB-2).